Reading from the N-terminus, the 166-residue chain is MSEAIIAKKAEQVELIAEKMKAAASIVVVDSRGLTVDQDTVLRRSLRESGVEFKVIKNSILTRAAEKAGLDELKDVFVGPSAVAFSNEDVIAPAKVINDFTKTADALEIKGGAIEGAVSSKEEIQALATLPNRQGMLSMLLSVLQAPVRNVAYAVKAVAENKEGAA.

The protein belongs to the universal ribosomal protein uL10 family. As to quaternary structure, part of the ribosomal stalk of the 50S ribosomal subunit. The N-terminus interacts with L11 and the large rRNA to form the base of the stalk. The C-terminus forms an elongated spine to which L12 dimers bind in a sequential fashion forming a multimeric L10(L12)X complex.

Its function is as follows. Forms part of the ribosomal stalk, playing a central role in the interaction of the ribosome with GTP-bound translation factors. In Streptococcus pyogenes serotype M18 (strain MGAS8232), this protein is Large ribosomal subunit protein uL10 (rplJ).